A 234-amino-acid polypeptide reads, in one-letter code: N-(5'-phosphoribosyl)anthranilate isomerase (234 aa).

Residues 211 to 234 (RAASSSPRPVDGESPAFQRSEKAG) form a disordered region.

Belongs to the TrpF family.

The catalysed reaction is N-(5-phospho-beta-D-ribosyl)anthranilate = 1-(2-carboxyphenylamino)-1-deoxy-D-ribulose 5-phosphate. Its pathway is amino-acid biosynthesis; L-tryptophan biosynthesis; L-tryptophan from chorismate: step 3/5. This Afipia carboxidovorans (strain ATCC 49405 / DSM 1227 / KCTC 32145 / OM5) (Oligotropha carboxidovorans) protein is N-(5'-phosphoribosyl)anthranilate isomerase.